The following is a 276-amino-acid chain: MAD2L1-binding protein (276 aa).

The span at 1–10 (MAASGEEDMS) shows a compositional bias: acidic residues. Positions 1–30 (MAASGEEDMSELSPAAAPNLDWYEKPEETH) are disordered. The interaction with MAD2L1 stretch occupies residues 49–81 (PAEPFCPRDLVPVVFPGPVSQEDCCQFTCELLK).

The protein belongs to the MAD2L1BP family. As to quaternary structure, interacts with MAD2L1.

It is found in the nucleus. The protein localises to the nucleoplasm. Its subcellular location is the cytoplasm. The protein resides in the cytoskeleton. It localises to the spindle. Its function is as follows. May function to silence the spindle checkpoint and allow mitosis to proceed through anaphase by binding MAD2L1 after it has become dissociated from the MAD2L1-CDC20 complex. The protein is MAD2L1-binding protein (Mad2l1bp) of Mus musculus (Mouse).